The primary structure comprises 403 residues: Tyrosine--tRNA ligase (403 aa).

A 'HIGH' region motif is present at residues 46–55; the sequence is PTAPDLHLGH. The 'KMSKS' region motif lies at 230–234; it reads KMSKS. Lys233 is an ATP binding site. Positions 342 to 402 constitute an S4 RNA-binding domain; that stretch reads LFITQILNQA…GKKAYAKVTV (61 aa).

This sequence belongs to the class-I aminoacyl-tRNA synthetase family. TyrS type 2 subfamily. As to quaternary structure, homodimer.

It localises to the cytoplasm. It carries out the reaction tRNA(Tyr) + L-tyrosine + ATP = L-tyrosyl-tRNA(Tyr) + AMP + diphosphate + H(+). Catalyzes the attachment of tyrosine to tRNA(Tyr) in a two-step reaction: tyrosine is first activated by ATP to form Tyr-AMP and then transferred to the acceptor end of tRNA(Tyr). The protein is Tyrosine--tRNA ligase of Psychrobacter arcticus (strain DSM 17307 / VKM B-2377 / 273-4).